Consider the following 233-residue polypeptide: Cysteine-rich venom protein LIO1 (233 aa).

Positions 1-18 (MIVFILLSFAAVLQQSFG) are cleaved as a signal peptide. The SCP domain maps to 37-165 (VDTHNSYRRS…PYNYFYVCQY (129 aa)). 7 disulfide bridges follow: Cys-74–Cys-152, Cys-91–Cys-166, Cys-147–Cys-163, Cys-185–Cys-192, Cys-188–Cys-197, Cys-210–Cys-228, and Cys-219–Cys-232. Positions 201-233 (CTSENVFTNCNDMVKESGCQDERMKSICPASCF) constitute a ShKT domain.

Belongs to the CRISP family. Expressed by the venom gland.

It is found in the secreted. Its function is as follows. Blocks contraction of smooth muscle elicited by high potassium-induced depolarization, but does not block caffeine-stimulated contraction. May target voltage-gated calcium channels on smooth muscle. The polypeptide is Cysteine-rich venom protein LIO1 (Erythrolamprus poecilogyrus (Water snake)).